Reading from the N-terminus, the 157-residue chain is 1,4-dihydroxy-2-naphthoyl-CoA thioesterase 2 (157 aa).

The active site involves Glu-56. The Microbody targeting signal signature appears at 154–156 (ISK).

Belongs to the 4-hydroxybenzoyl-CoA thioesterase family. DHNA-CoA hydrolase subfamily. Homotetramers.

The protein resides in the peroxisome. Its pathway is cofactor biosynthesis; phylloquinone biosynthesis. The protein operates within quinol/quinone metabolism; 1,4-dihydroxy-2-naphthoate biosynthesis; 1,4-dihydroxy-2-naphthoate from chorismate: step 7/7. Catalyzes the hydrolysis of the thioester bond of 1,4-dihydroxy-2-naphthoyl-CoA (DHNA-CoA) in peroxisomes, a necessary step to form the naphthoquinone ring of phylloquinone (vitamin K(1)). Displayed also slight thioesterase activity towards benzoyl-CoA. Is not active on phenylacetyl-CoA, succinyl-CoA and palmitoyl-CoA thioesters. The chain is 1,4-dihydroxy-2-naphthoyl-CoA thioesterase 2 from Arabidopsis thaliana (Mouse-ear cress).